The primary structure comprises 588 residues: Phomenoic acid biosynthesis cluster cytochrome P450 monooxygenase (588 aa).

Positions 1–21 (MSFARIFITILLLFILRRAFK) are cleaved as a signal peptide. Residue N293 is glycosylated (N-linked (GlcNAc...) asparagine). Residues 467–486 (HQSDPDRFKPSPDAPDEKLF) are compositionally biased toward basic and acidic residues. The tract at residues 467 to 490 (HQSDPDRFKPSPDAPDEKLFRPSR) is disordered. Residue C519 participates in heme binding.

Belongs to the cytochrome P450 family. Requires heme as cofactor.

It functions in the pathway secondary metabolite biosynthesis. Functionally, cytochrome P450 monooxygenase; part of the gene cluster that mediates the biosynthesis of phomenoic acid, a long chain aliphatic carboxylic acid that does not appear to be essential for pathogenicity but may play a role in allowing to outcompete other fungi in the environmental niche via its antifungal properties. The polyketide synthase produces the long methylated aliphatic carboxylic acid chain of phomenoic acid. The cluster-specific cytochrome P450 monooxygenase may then hydroxylate the methyl group of carbon 31. The putative dehydrogenase YogA, which has no obvious role in phomenoic acid biosynthesis, may further modify phomenoic acid to produce a compound not identified yet. This chain is Phomenoic acid biosynthesis cluster cytochrome P450 monooxygenase, found in Leptosphaeria maculans (strain JN3 / isolate v23.1.3 / race Av1-4-5-6-7-8) (Blackleg fungus).